A 203-amino-acid chain; its full sequence is Small ribosomal subunit protein uS4 (203 aa).

An S4 RNA-binding domain is found at 93–153 (RRLDNVVYRL…EKSKNLQQVK (61 aa)).

Belongs to the universal ribosomal protein uS4 family. In terms of assembly, part of the 30S ribosomal subunit. Contacts protein S5. The interaction surface between S4 and S5 is involved in control of translational fidelity.

Functionally, one of the primary rRNA binding proteins, it binds directly to 16S rRNA where it nucleates assembly of the body of the 30S subunit. In terms of biological role, with S5 and S12 plays an important role in translational accuracy. The protein is Small ribosomal subunit protein uS4 of Lactobacillus delbrueckii subsp. bulgaricus (strain ATCC 11842 / DSM 20081 / BCRC 10696 / JCM 1002 / NBRC 13953 / NCIMB 11778 / NCTC 12712 / WDCM 00102 / Lb 14).